The primary structure comprises 304 residues: MIKQRTPKKVIQATGVGLHSGEKVLLTLRPAPVNTGIVFRRVDLSPVVEIPASYEYVGDTMLCTTLHHGKVKIATVEHLLSALAGLGIDNAYIDVNAPEIPIMDGSAAPFVFLIQSAGIREQNAAKRYIRILKPIRVEENGKYVQFLPHKGYKITFTIGFEHPVFNDRPQTVSFDFSGTSYVKEVCRARTFGFLSDYEKLRECDLAKGGSLDNAIVVDDYRVLNEDGLRFESEFVTHKVLDAIGDLYLLGSSLIGAFEGYKSGHELNNRLLRELMIRQDAWEYTYFDTENYLPAVHPEYYPVEA.

Zn(2+)-binding residues include His78, His237, and Asp241. Residue His264 is the Proton donor of the active site.

The protein belongs to the LpxC family. Zn(2+) is required as a cofactor.

The enzyme catalyses a UDP-3-O-[(3R)-3-hydroxyacyl]-N-acetyl-alpha-D-glucosamine + H2O = a UDP-3-O-[(3R)-3-hydroxyacyl]-alpha-D-glucosamine + acetate. Its pathway is glycolipid biosynthesis; lipid IV(A) biosynthesis; lipid IV(A) from (3R)-3-hydroxytetradecanoyl-[acyl-carrier-protein] and UDP-N-acetyl-alpha-D-glucosamine: step 2/6. Catalyzes the hydrolysis of UDP-3-O-myristoyl-N-acetylglucosamine to form UDP-3-O-myristoylglucosamine and acetate, the committed step in lipid A biosynthesis. The protein is UDP-3-O-acyl-N-acetylglucosamine deacetylase of Legionella pneumophila (strain Lens).